Reading from the N-terminus, the 754-residue chain is Phosphatase and actin regulator 4B (754 aa).

A compositionally biased stretch (basic and acidic residues) spans 1–12 (MENRDDEVEHQH). Disordered regions lie at residues 1-38 (MENRDDEVEHQHSTMGSEGGTAGDGTPPPKRKGKFSTL), 83-105 (KELPDNESGEAHGHKAPYVKNGH), 120-625 (VHSP…SKEQ), and 637-666 (LTRRLSQRPTAEELEQRNILQPKNEADRQA). The RPEL 1 repeat unit spans residues 61-86 (EVLERKMSMRRPRQELIEQGVLKELP). Composition is skewed to basic and acidic residues over residues 138–153 (PEDRRARAPSDGDHRG), 184–221 (HGEDIRRGGRAHAEMDKRPGLMKAPSEDGRRTRPEPDW), and 229–241 (SSVEEGRGRRESD). 2 stretches are compositionally biased toward low complexity: residues 296–307 (SFCSSNSSSSSS) and 316–333 (SSAGANTAPPGGAPLTTS). Composition is skewed to pro residues over residues 348 to 357 (KQPPMPPPKP), 381 to 390 (KPSPPMPPKR), 427 to 445 (LPPPPPSPPLPTHIPPSPP), and 460 to 478 (YPLPQPLPVHFDPPSPPED). Composition is skewed to acidic residues over residues 483–503 (DEDDYSDEEEEEEDDEDDEEP), 541–557 (SEEEEDEEDQHPEESDS), and 566–576 (DESDEDEEDDS). Basic and acidic residues predominate over residues 605 to 615 (QAPERQAKSEH). 2 RPEL repeats span residues 635-660 (TALTRRLSQRPTAEELEQRNILQPKN) and 673-698 (RRLTRKLSQRPTVAELQARKILRFHE). Position 642 is a phosphoserine (serine 642).

The protein belongs to the phosphatase and actin regulator family. In terms of assembly, binds ppp1ca and actin.

It localises to the cytoplasm. It is found in the cell projection. Its subcellular location is the lamellipodium. In terms of biological role, regulator of protein phosphatase 1 (PP1) required for neural tube and optic fissure closure, and enteric neural crest cell (ENCCs) migration during development. Acts as an activator of PP1. During neural tube closure, localizes to the ventral neural tube and activates PP1, leading to down-regulate cell proliferation within cranial neural tissue and the neural retina. Also acts as a regulator of migration of enteric neural crest cells (ENCCs) by activating PP1, leading to repression of the integrin signaling through the rho/rock pathway. The protein is Phosphatase and actin regulator 4B (phactr4b) of Danio rerio (Zebrafish).